Consider the following 150-residue polypeptide: Ribosomal RNA large subunit methyltransferase H (150 aa).

Residues Leu68, Gly97, and 116 to 121 (LSAMTL) contribute to the S-adenosyl-L-methionine site.

Belongs to the RNA methyltransferase RlmH family. Homodimer.

Its subcellular location is the cytoplasm. The enzyme catalyses pseudouridine(1915) in 23S rRNA + S-adenosyl-L-methionine = N(3)-methylpseudouridine(1915) in 23S rRNA + S-adenosyl-L-homocysteine + H(+). Functionally, specifically methylates the pseudouridine at position 1915 (m3Psi1915) in 23S rRNA. The sequence is that of Ribosomal RNA large subunit methyltransferase H from Prochlorococcus marinus (strain MIT 9303).